Reading from the N-terminus, the 194-residue chain is NADH-quinone oxidoreductase subunit B (194 aa).

The span at methionine 1 to valine 11 shows a compositional bias: polar residues. The disordered stretch occupies residues methionine 1–alanine 22. Residues cysteine 72, cysteine 73, cysteine 138, and cysteine 168 each contribute to the [4Fe-4S] cluster site.

The protein belongs to the complex I 20 kDa subunit family. NDH-1 is composed of 14 different subunits. Subunits NuoB, C, D, E, F, and G constitute the peripheral sector of the complex. Requires [4Fe-4S] cluster as cofactor.

Its subcellular location is the cell inner membrane. It carries out the reaction a quinone + NADH + 5 H(+)(in) = a quinol + NAD(+) + 4 H(+)(out). Its function is as follows. NDH-1 shuttles electrons from NADH, via FMN and iron-sulfur (Fe-S) centers, to quinones in the respiratory chain. The immediate electron acceptor for the enzyme in this species is believed to be ubiquinone. Couples the redox reaction to proton translocation (for every two electrons transferred, four hydrogen ions are translocated across the cytoplasmic membrane), and thus conserves the redox energy in a proton gradient. The sequence is that of NADH-quinone oxidoreductase subunit B from Agrobacterium fabrum (strain C58 / ATCC 33970) (Agrobacterium tumefaciens (strain C58)).